The following is a 329-amino-acid chain: Biotin synthase (329 aa).

Residues 48–278 (FLGNGVDLCS…TKKIAVCGGR (231 aa)) form the Radical SAM core domain. [4Fe-4S] cluster is bound by residues Cys66, Cys70, and Cys73. Positions 143 and 203 each coordinate [2Fe-2S] cluster.

It belongs to the radical SAM superfamily. Biotin synthase family. Homodimer. Requires [4Fe-4S] cluster as cofactor. [2Fe-2S] cluster serves as cofactor.

It carries out the reaction (4R,5S)-dethiobiotin + (sulfur carrier)-SH + 2 reduced [2Fe-2S]-[ferredoxin] + 2 S-adenosyl-L-methionine = (sulfur carrier)-H + biotin + 2 5'-deoxyadenosine + 2 L-methionine + 2 oxidized [2Fe-2S]-[ferredoxin]. It participates in cofactor biosynthesis; biotin biosynthesis; biotin from 7,8-diaminononanoate: step 2/2. In terms of biological role, catalyzes the conversion of dethiobiotin (DTB) to biotin by the insertion of a sulfur atom into dethiobiotin via a radical-based mechanism. The sequence is that of Biotin synthase from Geobacter metallireducens (strain ATCC 53774 / DSM 7210 / GS-15).